We begin with the raw amino-acid sequence, 465 residues long: Methionine aminopeptidase 2-2 (465 aa).

The segment covering 1-11 (MGSKTPHNHRR) has biased composition (basic residues). Residues 1 to 89 (MGSKTPHNHR…KKKKNTKELE (89 aa)) form a disordered region. Residues 43-54 (GESEGGEDEDDD) show a composition bias toward acidic residues. Basic residues predominate over residues 73-84 (RNKRKKKKKKKN). H217 contributes to the substrate binding site. Positions 238, 249, and 318 each coordinate a divalent metal cation. H326 serves as a coordination point for substrate. A divalent metal cation contacts are provided by E351 and E446.

This sequence belongs to the peptidase M24A family. Methionine aminopeptidase eukaryotic type 2 subfamily. It depends on Co(2+) as a cofactor. Zn(2+) serves as cofactor. The cofactor is Mn(2+). Fe(2+) is required as a cofactor.

The protein resides in the cytoplasm. The enzyme catalyses Release of N-terminal amino acids, preferentially methionine, from peptides and arylamides.. Its function is as follows. Cotranslationally removes the N-terminal methionine from nascent proteins. The N-terminal methionine is often cleaved when the second residue in the primary sequence is small and uncharged (Met-Ala-, Cys, Gly, Pro, Ser, Thr, or Val). The chain is Methionine aminopeptidase 2-2 from Ajellomyces capsulatus (strain G186AR / H82 / ATCC MYA-2454 / RMSCC 2432) (Darling's disease fungus).